Reading from the N-terminus, the 608-residue chain is UvrABC system protein C (608 aa).

Residues 13–91 enclose the GIY-YIG domain; the sequence is HDAGVYRMYD…IKTYQPRYNV (79 aa). Residues 201 to 236 enclose the UVR domain; the sequence is QQVLEHLIHKMEQASLALDFEEAARIRDQIQAVRAV.

This sequence belongs to the UvrC family. In terms of assembly, interacts with UvrB in an incision complex.

The protein localises to the cytoplasm. Its function is as follows. The UvrABC repair system catalyzes the recognition and processing of DNA lesions. UvrC both incises the 5' and 3' sides of the lesion. The N-terminal half is responsible for the 3' incision and the C-terminal half is responsible for the 5' incision. The chain is UvrABC system protein C from Pasteurella multocida (strain Pm70).